The following is a 732-amino-acid chain: DNA gyrase subunit B, mitochondrial (732 aa).

Positions 513-620 (SEIFIVEGDS…RYQRALFDAG (108 aa)) constitute a Toprim domain. Glutamate 519, aspartate 593, and aspartate 595 together coordinate Mg(2+).

The protein belongs to the type II topoisomerase GyrB family. As to quaternary structure, made up of two chains. The A chain is responsible for DNA breakage and rejoining; the B chain catalyzes ATP hydrolysis. It depends on Mg(2+) as a cofactor. Mn(2+) is required as a cofactor. The cofactor is Ca(2+).

It is found in the mitochondrion. It catalyses the reaction ATP-dependent breakage, passage and rejoining of double-stranded DNA.. In terms of biological role, a type II topoisomerase that negatively supercoils closed circular double-stranded DNA in an ATP-dependent manner. In Arabidopsis thaliana (Mouse-ear cress), this protein is DNA gyrase subunit B, mitochondrial (GYRBM).